The primary structure comprises 98 residues: (4S)-4-hydroxy-5-phosphonooxypentane-2,3-dione isomerase (98 aa).

Positions 2–91 (NVTLVEINIK…MSQPRQKRSF (90 aa)) constitute an ABM domain.

Belongs to the LsrG family. As to quaternary structure, homodimer.

The protein resides in the cytoplasm. It carries out the reaction (2S)-2-hydroxy-3,4-dioxopentyl phosphate = 3-hydroxy-2,4-dioxopentyl phosphate. Involved in the degradation of phospho-AI-2, thereby terminating induction of the lsr operon and closing the AI-2 signaling cycle. Catalyzes the conversion of (4S)-4-hydroxy-5-phosphonooxypentane-2,3-dione (P-DPD) to 3-hydroxy-5-phosphonooxypentane-2,4-dione (P-HPD). This is (4S)-4-hydroxy-5-phosphonooxypentane-2,3-dione isomerase from Klebsiella pneumoniae subsp. pneumoniae (strain ATCC 700721 / MGH 78578).